Consider the following 206-residue polypeptide: Guanylate kinase (206 aa).

A Guanylate kinase-like domain is found at 3 to 183 (GNLYILSAPS…ALTELKSILT (181 aa)). Residue 10 to 17 (APSGAGKS) participates in ATP binding.

It belongs to the guanylate kinase family.

It is found in the cytoplasm. It carries out the reaction GMP + ATP = GDP + ADP. In terms of biological role, essential for recycling GMP and indirectly, cGMP. The chain is Guanylate kinase from Haemophilus ducreyi (strain 35000HP / ATCC 700724).